The primary structure comprises 61 residues: Large ribosomal subunit protein uL30 (61 aa).

It belongs to the universal ribosomal protein uL30 family. In terms of assembly, part of the 50S ribosomal subunit.

This is Large ribosomal subunit protein uL30 from Petrotoga mobilis (strain DSM 10674 / SJ95).